Reading from the N-terminus, the 523-residue chain is SWI/SNF and RSC complexes subunit arp9 (523 aa).

Positions 56-72 (INMEDPNVKTDETKVET) are enriched in basic and acidic residues. Disordered stretches follow at residues 56 to 92 (INME…KNMG) and 319 to 339 (QKER…NTDV). A compositionally biased stretch (polar residues) spans 79-92 (QPSNSNVTEEKNMG). The span at 319–336 (QKEREKNGESEKDEKPDN) shows a compositional bias: basic and acidic residues.

The protein belongs to the actin family. As to quaternary structure, component of the RSC complex composed of at least arp9, arp42, rsc1, rsc4, rsc7, rsc9, rsc58, sfh1, snf21, ssr1, ssr2, ssr3 and ssr4. The complex interacts with histone and histone variant components of centromeric chromatin. Component of the SWI/SNF global transcription activator complex composed of at least arp9, arp42, snf5, snf22, snf30, sbf59, sol1, ssr1, ssr2, ssr3, ssr4 and tfg3.

Its subcellular location is the cytoplasm. It localises to the nucleus. In terms of biological role, component of the chromatin structure remodeling complex (RSC), which is involved in transcription regulation and nucleosome positioning. Controls particularly membrane and organelle development genes. Part of the SWI/SNF complex, an ATP-dependent chromatin remodeling complex, required for the positive and negative regulation of gene expression of a large number of genes. It changes chromatin structure by altering DNA-histone contacts within a nucleosome, leading eventually to a change in nucleosome position, thus facilitating or repressing binding of gene-specific transcription factors. This is SWI/SNF and RSC complexes subunit arp9 (arp9) from Schizosaccharomyces pombe (strain 972 / ATCC 24843) (Fission yeast).